The following is a 273-amino-acid chain: Bis(5'-nucleosyl)-tetraphosphatase, symmetrical (273 aa).

It belongs to the Ap4A hydrolase family.

It carries out the reaction P(1),P(4)-bis(5'-adenosyl) tetraphosphate + H2O = 2 ADP + 2 H(+). Its function is as follows. Hydrolyzes diadenosine 5',5'''-P1,P4-tetraphosphate to yield ADP. The sequence is that of Bis(5'-nucleosyl)-tetraphosphatase, symmetrical from Histophilus somni (strain 129Pt) (Haemophilus somnus).